Reading from the N-terminus, the 201-residue chain is Segregation and condensation protein B (201 aa).

It belongs to the ScpB family. In terms of assembly, homodimer. Homodimerization may be required to stabilize the binding of ScpA to the Smc head domains. Component of a cohesin-like complex composed of ScpA, ScpB and the Smc homodimer, in which ScpA and ScpB bind to the head domain of Smc. The presence of the three proteins is required for the association of the complex with DNA.

The protein resides in the cytoplasm. Participates in chromosomal partition during cell division. May act via the formation of a condensin-like complex containing Smc and ScpA that pull DNA away from mid-cell into both cell halves. This Enterococcus faecalis (strain ATCC 700802 / V583) protein is Segregation and condensation protein B.